We begin with the raw amino-acid sequence, 592 residues long: Arginine--tRNA ligase (592 aa).

Positions 129–139 (ANPTGPLHVGH) match the 'HIGH' region motif.

It belongs to the class-I aminoacyl-tRNA synthetase family. As to quaternary structure, monomer.

It is found in the cytoplasm. It carries out the reaction tRNA(Arg) + L-arginine + ATP = L-arginyl-tRNA(Arg) + AMP + diphosphate. The polypeptide is Arginine--tRNA ligase (Dichelobacter nodosus (strain VCS1703A)).